A 343-amino-acid polypeptide reads, in one-letter code: Ubiquitin thioesterase OTU1 (343 aa).

Residues 45–123 (RCKAKGGTHV…IVEEDQTRPK (79 aa)) are UBX-like. Residues 144 to 269 (LTRTAVPADN…GIHYDPLQRN (126 aa)) form the OTU domain. Positions 149–155 (VPADNSC) are cys-loop. Residue aspartate 152 is part of the active site. Catalysis depends on cysteine 155, which acts as the Nucleophile. The tract at residues 208–218 (IRRDDTWGGAI) is variable-loop. The interval 258–262 (YDGIH) is his-loop. A substrate-binding site is contributed by isoleucine 261. Histidine 262 is an active-site residue. Residues 286–291 (DIVLVQ) are S2 site. The C2H2-type zinc finger occupies 313–337 (LRCMLCQKGLTGQAEARDHARETGH). Histidine 337 is an active-site residue.

In terms of assembly, interacts with VCP; the interaction is direct. Interacts with FAF2/UBXD8. Interacts with DERL1; however interaction is dependent on the UBAX-like region, suggesting that it may be indirect. Interacts with PLAA, UBXN6 and VCP; may form a complex involved in macroautophagy.

The protein resides in the cytoplasm. It catalyses the reaction Thiol-dependent hydrolysis of ester, thioester, amide, peptide and isopeptide bonds formed by the C-terminal Gly of ubiquitin (a 76-residue protein attached to proteins as an intracellular targeting signal).. In terms of biological role, hydrolase that can remove conjugated ubiquitin from proteins and participates in endoplasmic reticulum-associated degradation (ERAD) for misfolded lumenal proteins. May act by triming the ubiquitin chain on the associated substrate to facilitate their threading through the VCP/p97 pore. Ubiquitin moieties on substrates may present a steric impediment to the threading process when the substrate is transferred to the VCP pore and threaded through VCP's axial channel. Mediates deubiquitination of 'Lys-27'-, 'Lys-29'- and 'Lys-33'-linked polyubiquitin chains. Also able to hydrolyze 'Lys-11'-linked ubiquitin chains. Cleaves both polyubiquitin and di-ubiquitin. May play a role in macroautophagy, regulating for instance the clearance of damaged lysosomes. May recruit PLAA, UBXN6 and VCP to damaged lysosome membranes decorated with K48-linked ubiquitin chains and remove these chains allowing autophagosome formation. This chain is Ubiquitin thioesterase OTU1 (Yod1), found in Rattus norvegicus (Rat).